Here is a 29-residue protein sequence, read N- to C-terminus: Omega-conotoxins GVIIA/GVIIB (29 aa).

3 disulfides stabilise this stretch: Cys1-Cys16, Cys8-Cys19, and Cys15-Cys26. 2 positions are modified to 4-hydroxyproline: Pro4 and Pro7.

In terms of tissue distribution, expressed by the venom duct.

It is found in the secreted. Functionally, omega-conotoxins act at presynaptic membranes, they bind and block voltage-gated calcium channels (Cav). The chain is Omega-conotoxins GVIIA/GVIIB from Conus geographus (Geography cone).